Reading from the N-terminus, the 219-residue chain is 2-hydroxy-3-keto-5-methylthiopentenyl-1-phosphate phosphatase (219 aa).

The protein belongs to the HAD-like hydrolase superfamily. MtnX family.

The catalysed reaction is 2-hydroxy-5-methylsulfanyl-3-oxopent-1-enyl phosphate + H2O = 1,2-dihydroxy-5-(methylsulfanyl)pent-1-en-3-one + phosphate. Its pathway is amino-acid biosynthesis; L-methionine biosynthesis via salvage pathway; L-methionine from S-methyl-5-thio-alpha-D-ribose 1-phosphate: step 4/6. Its function is as follows. Dephosphorylates 2-hydroxy-3-keto-5-methylthiopentenyl-1-phosphate (HK-MTPenyl-1-P) yielding 1,2-dihydroxy-3-keto-5-methylthiopentene (DHK-MTPene). This Bacillus anthracis (strain A0248) protein is 2-hydroxy-3-keto-5-methylthiopentenyl-1-phosphate phosphatase.